A 615-amino-acid chain; its full sequence is MNNLIKSKLELLPTSPGCYIHKDKNGTIIYVGKAKNLRNRVRSYFRGSHDTKTEALVSEIVDFEFIVTESNIEALLLEINLIKENKPKYNIMLKDDKSYPFIKITNERYPRLIITRQVKKDGGLYFGPYPDVGAANEIKRLLDRIFPFRKCTNPPSKVCFYYHIGQCMAHTICKKDEIYFKSMAQEVSDFLKGQDNKIIDELKGKMAAAAQTMEFERAAEYRDLIQAIGTLRTKQRVMAKDLQNRDVFGYYVDKGWMCVQVFFVRQGKLIERDVNLFPYFNDPDEDFLTYVGQFYQEKSHLVPNEVLIPQDIDEEAVKALVDSKILKPQRGEKKQLVNLAIKNARVSLEQKFNLLEKSVEKTQGAIENLGRLLQIPTPVRIESFDNSNIMGTSPVSAMVVFVNGKPSKKDYRKYKIKTVVGPDDYASMREVIRRRYGRVQREALTPPDLIVIDGGQGQVNIAKQVIQEELGLDIPIAGLQKNDKHQTHELLFGDPLEVVDLSRNSQEFFLLQRIQDEVHRFAITFHRQLRSKNSFSSQLDGIDGLGPKRKQNLMRHFKSLTKIKEASVDEIVEVGVPRAVAEAVQTKLNPQETEILLQVAEERVDYQTEGNHNKP.

In terms of domain architecture, GIY-YIG spans 14–91 (TSPGCYIHKD…IKENKPKYNI (78 aa)). Residues 196–231 (NKIIDELKGKMAAAAQTMEFERAAEYRDLIQAIGTL) form the UVR domain.

The protein belongs to the UvrC family. Interacts with UvrB in an incision complex.

The protein resides in the cytoplasm. Its function is as follows. The UvrABC repair system catalyzes the recognition and processing of DNA lesions. UvrC both incises the 5' and 3' sides of the lesion. The N-terminal half is responsible for the 3' incision and the C-terminal half is responsible for the 5' incision. This chain is UvrABC system protein C, found in Streptococcus pneumoniae (strain ATCC 700669 / Spain 23F-1).